The following is a 437-amino-acid chain: Glutamyl-tRNA reductase (437 aa).

Substrate is bound by residues 49–52 (TCNR), Ser-109, 114–116 (EGQ), and Gln-120. Catalysis depends on Cys-50, which acts as the Nucleophile. An NADP(+)-binding site is contributed by 198-203 (GAGRMS).

Belongs to the glutamyl-tRNA reductase family. Homodimer.

It carries out the reaction (S)-4-amino-5-oxopentanoate + tRNA(Glu) + NADP(+) = L-glutamyl-tRNA(Glu) + NADPH + H(+). It functions in the pathway porphyrin-containing compound metabolism; protoporphyrin-IX biosynthesis; 5-aminolevulinate from L-glutamyl-tRNA(Glu): step 1/2. The protein operates within porphyrin-containing compound metabolism; chlorophyll biosynthesis. Its function is as follows. Catalyzes the NADPH-dependent reduction of glutamyl-tRNA(Glu) to glutamate 1-semialdehyde (GSA). In Prochlorococcus marinus (strain SARG / CCMP1375 / SS120), this protein is Glutamyl-tRNA reductase.